The sequence spans 214 residues: Shikimate kinase (214 aa).

35-40 (GAGKST) contributes to the ATP binding site. Ser39 contributes to the Mg(2+) binding site. Positions 57, 81, and 103 each coordinate substrate. ATP is bound at residue Arg141. Substrate is bound at residue Arg160.

This sequence belongs to the shikimate kinase family. In terms of assembly, monomer. Requires Mg(2+) as cofactor.

The protein localises to the cytoplasm. It catalyses the reaction shikimate + ATP = 3-phosphoshikimate + ADP + H(+). The protein operates within metabolic intermediate biosynthesis; chorismate biosynthesis; chorismate from D-erythrose 4-phosphate and phosphoenolpyruvate: step 5/7. Its function is as follows. Catalyzes the specific phosphorylation of the 3-hydroxyl group of shikimic acid using ATP as a cosubstrate. The chain is Shikimate kinase from Nitrobacter winogradskyi (strain ATCC 25391 / DSM 10237 / CIP 104748 / NCIMB 11846 / Nb-255).